The sequence spans 236 residues: Ribose-5-phosphate isomerase A (236 aa).

Residues 31-34 (TGST), 88-91 (DGAD), and 101-104 (KGGG) each bind substrate. Glu-110 functions as the Proton acceptor in the catalytic mechanism. Residue Lys-128 participates in substrate binding.

The protein belongs to the ribose 5-phosphate isomerase family. Homodimer.

It catalyses the reaction aldehydo-D-ribose 5-phosphate = D-ribulose 5-phosphate. It participates in carbohydrate degradation; pentose phosphate pathway; D-ribose 5-phosphate from D-ribulose 5-phosphate (non-oxidative stage): step 1/1. In terms of biological role, catalyzes the reversible conversion of ribose-5-phosphate to ribulose 5-phosphate. This chain is Ribose-5-phosphate isomerase A, found in Thermosynechococcus vestitus (strain NIES-2133 / IAM M-273 / BP-1).